Here is a 354-residue protein sequence, read N- to C-terminus: UDP-3-O-acylglucosamine N-acyltransferase (354 aa).

The Proton acceptor role is filled by H247.

Belongs to the transferase hexapeptide repeat family. LpxD subfamily. In terms of assembly, homotrimer.

The enzyme catalyses a UDP-3-O-[(3R)-3-hydroxyacyl]-alpha-D-glucosamine + a (3R)-hydroxyacyl-[ACP] = a UDP-2-N,3-O-bis[(3R)-3-hydroxyacyl]-alpha-D-glucosamine + holo-[ACP] + H(+). It participates in bacterial outer membrane biogenesis; LPS lipid A biosynthesis. Catalyzes the N-acylation of UDP-3-O-acylglucosamine using 3-hydroxyacyl-ACP as the acyl donor. Is involved in the biosynthesis of lipid A, a phosphorylated glycolipid that anchors the lipopolysaccharide to the outer membrane of the cell. The chain is UDP-3-O-acylglucosamine N-acyltransferase from Chlamydia trachomatis serovar A (strain ATCC VR-571B / DSM 19440 / HAR-13).